A 634-amino-acid polypeptide reads, in one-letter code: Putative peptidoglycan O-acetyltransferase YrhL (634 aa).

The next 11 membrane-spanning stretches (helical) occupy residues Y10–L30, G38–L58, R79–D99, A110–F130, L145–I165, L172–E192, F244–L264, L270–L290, Y307–G327, P329–Y349, and M385–A405. Positions K413–T481 are disordered. Residues W414–S429 show a composition bias toward polar residues. Basic and acidic residues-rich tracts occupy residues G430–T447 and K455–T470.

Belongs to the acyltransferase 3 family.

The protein resides in the cell membrane. This chain is Putative peptidoglycan O-acetyltransferase YrhL (yrhL), found in Bacillus subtilis (strain 168).